The chain runs to 365 residues: Protein-glutamate methylesterase/protein-glutamine glutaminase (365 aa).

The Response regulatory domain maps to 5 to 122 (KVLIVDDSAF…SLDIRKIGEK (118 aa)). Asp56 carries the post-translational modification 4-aspartylphosphate. Residues 146-155 (IKKEKQDESS) show a composition bias toward basic and acidic residues. The tract at residues 146–167 (IKKEKQDESSTPKPQVEKTSGL) is disordered. Over residues 156–167 (TPKPQVEKTSGL) the composition is skewed to polar residues. The region spanning 177–363 (ILIGSSTGGP…LEIIKFAKKI (187 aa)) is the CheB-type methylesterase domain. Residues Ser182, His208, and Asp305 contribute to the active site.

It belongs to the CheB family. Phosphorylated by CheA. Phosphorylation of the N-terminal regulatory domain activates the methylesterase activity.

Its subcellular location is the cytoplasm. It carries out the reaction [protein]-L-glutamate 5-O-methyl ester + H2O = L-glutamyl-[protein] + methanol + H(+). The enzyme catalyses L-glutaminyl-[protein] + H2O = L-glutamyl-[protein] + NH4(+). Its function is as follows. Involved in chemotaxis. Part of a chemotaxis signal transduction system that modulates chemotaxis in response to various stimuli. Catalyzes the demethylation of specific methylglutamate residues introduced into the chemoreceptors (methyl-accepting chemotaxis proteins or MCP) by CheR. Also mediates the irreversible deamidation of specific glutamine residues to glutamic acid. This is Protein-glutamate methylesterase/protein-glutamine glutaminase from Methanococcus maripaludis (strain DSM 14266 / JCM 13030 / NBRC 101832 / S2 / LL).